The primary structure comprises 611 residues: Dihydroxy-acid dehydratase (611 aa).

Asp-81 contributes to the Mg(2+) binding site. Cys-122 is a binding site for [2Fe-2S] cluster. 2 residues coordinate Mg(2+): Asp-123 and Lys-124. Lys-124 is subject to N6-carboxylysine. Cys-195 is a binding site for [2Fe-2S] cluster. Glu-491 contacts Mg(2+). The active-site Proton acceptor is Ser-517.

This sequence belongs to the IlvD/Edd family. Homodimer. It depends on [2Fe-2S] cluster as a cofactor. Mg(2+) serves as cofactor.

The catalysed reaction is (2R)-2,3-dihydroxy-3-methylbutanoate = 3-methyl-2-oxobutanoate + H2O. The enzyme catalyses (2R,3R)-2,3-dihydroxy-3-methylpentanoate = (S)-3-methyl-2-oxopentanoate + H2O. It functions in the pathway amino-acid biosynthesis; L-isoleucine biosynthesis; L-isoleucine from 2-oxobutanoate: step 3/4. It participates in amino-acid biosynthesis; L-valine biosynthesis; L-valine from pyruvate: step 3/4. Functions in the biosynthesis of branched-chain amino acids. Catalyzes the dehydration of (2R,3R)-2,3-dihydroxy-3-methylpentanoate (2,3-dihydroxy-3-methylvalerate) into 2-oxo-3-methylpentanoate (2-oxo-3-methylvalerate) and of (2R)-2,3-dihydroxy-3-methylbutanoate (2,3-dihydroxyisovalerate) into 2-oxo-3-methylbutanoate (2-oxoisovalerate), the penultimate precursor to L-isoleucine and L-valine, respectively. In Brucella melitensis biotype 1 (strain ATCC 23456 / CCUG 17765 / NCTC 10094 / 16M), this protein is Dihydroxy-acid dehydratase.